Consider the following 159-residue polypeptide: Ribosomal RNA large subunit methyltransferase H (159 aa).

Residues L76, G108, and 127 to 132 contribute to the S-adenosyl-L-methionine site; that span reads FGLLTL.

This sequence belongs to the RNA methyltransferase RlmH family. As to quaternary structure, homodimer.

The protein resides in the cytoplasm. It catalyses the reaction pseudouridine(1915) in 23S rRNA + S-adenosyl-L-methionine = N(3)-methylpseudouridine(1915) in 23S rRNA + S-adenosyl-L-homocysteine + H(+). In terms of biological role, specifically methylates the pseudouridine at position 1915 (m3Psi1915) in 23S rRNA. The protein is Ribosomal RNA large subunit methyltransferase H of Streptococcus pyogenes serotype M5 (strain Manfredo).